The primary structure comprises 153 residues: 3-hydroxyacyl-[acyl-carrier-protein] dehydratase FabZ (153 aa).

His47 is an active-site residue.

This sequence belongs to the thioester dehydratase family. FabZ subfamily.

It localises to the cytoplasm. The catalysed reaction is a (3R)-hydroxyacyl-[ACP] = a (2E)-enoyl-[ACP] + H2O. Involved in unsaturated fatty acids biosynthesis. Catalyzes the dehydration of short chain beta-hydroxyacyl-ACPs and long chain saturated and unsaturated beta-hydroxyacyl-ACPs. This Myxococcus xanthus (strain DK1622) protein is 3-hydroxyacyl-[acyl-carrier-protein] dehydratase FabZ.